The following is a 439-amino-acid chain: Probable aspartic-type endopeptidase AFUA_3G01220 (439 aa).

Positions 1 to 20 (MHFSIGSLFLYLIASASCTA) are cleaved as a signal peptide. A disordered region spans residues 31-50 (RTPFTTSTSKPSAFTNPSTD). Low complexity predominate over residues 32 to 45 (TPFTTSTSKPSAFT). Residues 95–436 (FATSINIGNQ…DVGAAEMRFA (342 aa)) enclose the Peptidase A1 domain. N103 carries an N-linked (GlcNAc...) asparagine glycan. D111 is an active-site residue. 7 N-linked (GlcNAc...) asparagine glycosylation sites follow: N149, N178, N187, N253, N256, N276, and N308. The active site involves D323. Residues N361 and N394 are each glycosylated (N-linked (GlcNAc...) asparagine).

It belongs to the peptidase A1 family.

The protein resides in the secreted. Its function is as follows. Probable aspartic-type endopeptidase which contributes to virulence. The sequence is that of Probable aspartic-type endopeptidase AFUA_3G01220 from Aspergillus fumigatus (strain ATCC MYA-4609 / CBS 101355 / FGSC A1100 / Af293) (Neosartorya fumigata).